Consider the following 117-residue polypeptide: Large ribosomal subunit protein uL24 (117 aa).

Belongs to the universal ribosomal protein uL24 family. As to quaternary structure, part of the 50S ribosomal subunit.

In terms of biological role, one of two assembly initiator proteins, it binds directly to the 5'-end of the 23S rRNA, where it nucleates assembly of the 50S subunit. Functionally, one of the proteins that surrounds the polypeptide exit tunnel on the outside of the subunit. The protein is Large ribosomal subunit protein uL24 of Thermosynechococcus vestitus (strain NIES-2133 / IAM M-273 / BP-1).